The following is a 190-amino-acid chain: DNA-binding transcriptional repressor TetR (190 aa).

Residues Glu-6–Phe-66 enclose the HTH tetR-type domain. The H-T-H motif DNA-binding region spans Ser-29–Trp-48.

Homodimer.

In terms of biological role, binds to its own palindromic promoter and represses transcription of its operon; addition of tetracycline or doxycycline (but not tigecycline) interferes with DNA binding. Addition of TetX to the DNA-TetR-antibiotic complex restores DNA binding. In Mycobacteroides abscessus (strain ATCC 19977 / DSM 44196 / CCUG 20993 / CIP 104536 / JCM 13569 / NCTC 13031 / TMC 1543 / L948) (Mycobacterium abscessus), this protein is DNA-binding transcriptional repressor TetR.